A 155-amino-acid polypeptide reads, in one-letter code: Small ribosomal subunit protein uS15 (155 aa).

A compositionally biased stretch (basic residues) spans 1–10 (MARMHTRRRG). The interval 1-66 (MARMHTRRRG…EGVQGTPVPD (66 aa)) is disordered. The span at 21–33 (EPPEWSDVDEDAI) shows a compositional bias: acidic residues. The span at 34-45 (EERVVELAEQGH) shows a compositional bias: basic and acidic residues.

It belongs to the universal ribosomal protein uS15 family. As to quaternary structure, part of the 30S ribosomal subunit.

The polypeptide is Small ribosomal subunit protein uS15 (Halobacterium salinarum (strain ATCC 700922 / JCM 11081 / NRC-1) (Halobacterium halobium)).